We begin with the raw amino-acid sequence, 134 residues long: Profilin-2 (134 aa).

Residues cysteine 13 and cysteine 118 are joined by a disulfide bond. The short motif at 84-100 (AVIRGKKGAGGITIKKT) is the Involved in PIP2 interaction element. Threonine 114 is subject to Phosphothreonine.

It belongs to the profilin family. As to quaternary structure, occurs in many kinds of cells as a complex with monomeric actin in a 1:1 ratio. In terms of processing, phosphorylated by MAP kinases.

It localises to the cytoplasm. It is found in the cytoskeleton. In terms of biological role, binds to actin and affects the structure of the cytoskeleton. At high concentrations, profilin prevents the polymerization of actin, whereas it enhances it at low concentrations. The polypeptide is Profilin-2 (Olea europaea (Common olive)).